Consider the following 140-residue polypeptide: Large ribosomal subunit protein uL11 (140 aa).

The protein belongs to the universal ribosomal protein uL11 family. In terms of assembly, part of the ribosomal stalk of the 50S ribosomal subunit. Interacts with L10 and the large rRNA to form the base of the stalk. L10 forms an elongated spine to which L12 dimers bind in a sequential fashion forming a multimeric L10(L12)X complex. Post-translationally, one or more lysine residues are methylated.

Forms part of the ribosomal stalk which helps the ribosome interact with GTP-bound translation factors. The polypeptide is Large ribosomal subunit protein uL11 (Oleidesulfovibrio alaskensis (strain ATCC BAA-1058 / DSM 17464 / G20) (Desulfovibrio alaskensis)).